The following is a 349-amino-acid chain: Probable trehalose-phosphate phosphatase H (349 aa).

This sequence belongs to the trehalose phosphatase family. A divalent metal cation serves as cofactor.

The enzyme catalyses alpha,alpha-trehalose 6-phosphate + H2O = alpha,alpha-trehalose + phosphate. It participates in glycan biosynthesis; trehalose biosynthesis. Functionally, removes the phosphate from trehalose 6-phosphate to produce free trehalose. Trehalose accumulation in plant may improve abiotic stress tolerance. This is Probable trehalose-phosphate phosphatase H (TPPH) from Arabidopsis thaliana (Mouse-ear cress).